We begin with the raw amino-acid sequence, 170 residues long: ATP synthase subunit b (170 aa).

The helical transmembrane segment at 5 to 25 threads the bilayer; that stretch reads YFIPCLLLPTMMLASGGGGET.

This sequence belongs to the ATPase B chain family. In terms of assembly, F-type ATPases have 2 components, F(1) - the catalytic core - and F(0) - the membrane proton channel. F(1) has five subunits: alpha(3), beta(3), gamma(1), delta(1), epsilon(1). F(0) has three main subunits: a(1), b(2) and c(10-14). The alpha and beta chains form an alternating ring which encloses part of the gamma chain. F(1) is attached to F(0) by a central stalk formed by the gamma and epsilon chains, while a peripheral stalk is formed by the delta and b chains.

The protein localises to the cell inner membrane. In terms of biological role, f(1)F(0) ATP synthase produces ATP from ADP in the presence of a proton or sodium gradient. F-type ATPases consist of two structural domains, F(1) containing the extramembraneous catalytic core and F(0) containing the membrane proton channel, linked together by a central stalk and a peripheral stalk. During catalysis, ATP synthesis in the catalytic domain of F(1) is coupled via a rotary mechanism of the central stalk subunits to proton translocation. Functionally, component of the F(0) channel, it forms part of the peripheral stalk, linking F(1) to F(0). This is ATP synthase subunit b from Wolinella succinogenes (strain ATCC 29543 / DSM 1740 / CCUG 13145 / JCM 31913 / LMG 7466 / NCTC 11488 / FDC 602W) (Vibrio succinogenes).